The following is a 417-amino-acid chain: Tryptophan synthase beta chain (417 aa).

Lysine 99 bears the N6-(pyridoxal phosphate)lysine mark.

It belongs to the TrpB family. Tetramer of two alpha and two beta chains. It depends on pyridoxal 5'-phosphate as a cofactor.

The enzyme catalyses (1S,2R)-1-C-(indol-3-yl)glycerol 3-phosphate + L-serine = D-glyceraldehyde 3-phosphate + L-tryptophan + H2O. Its pathway is amino-acid biosynthesis; L-tryptophan biosynthesis; L-tryptophan from chorismate: step 5/5. Functionally, the beta subunit is responsible for the synthesis of L-tryptophan from indole and L-serine. This Corynebacterium glutamicum (strain R) protein is Tryptophan synthase beta chain.